Reading from the N-terminus, the 398-residue chain is Lysophosphatidylserine lipase ABHD12 (398 aa).

The span at 1-15 (MRKRTEPVTLEHERC) shows a compositional bias: basic and acidic residues. The segment at 1–24 (MRKRTEPVTLEHERCAASGSSSSG) is disordered. The Cytoplasmic portion of the chain corresponds to 1–74 (MRKRTEPVTL…RKSLWFRLRK (74 aa)). A helical transmembrane segment spans residues 75–95 (ILLCVLGFYIAIPFLVKLCPG). Residues 96 to 398 (IQAKLIFLNF…LGKSEPERQH (303 aa)) lie on the Extracellular side of the membrane. Residue Asn-123 is glycosylated (N-linked (GlcNAc...) asparagine). Ser-246 acts as the Nucleophile in catalysis. Residues Asp-333 and His-372 each act as charge relay system in the active site.

Belongs to the serine esterase family. In terms of processing, glycosylated.

It localises to the endoplasmic reticulum membrane. The protein localises to the mitochondrion. It carries out the reaction 1-(9Z-octadecenoyl)-sn-glycero-3-phospho-L-serine + H2O = sn-glycero-3-phospho-L-serine + (9Z)-octadecenoate + H(+). The catalysed reaction is 1-(9Z-octadecenoyl)-sn-glycero-3-phospho-(1'-sn-glycerol) + H2O = sn-glycero-3-phospho-(1'-sn-glycerol) + (9Z)-octadecenoate + H(+). The enzyme catalyses 1-(9Z-octadecenoyl)-sn-glycero-3-phospho-(1D-myo-inositol) + H2O = sn-glycero-3-phospho-1D-myo-inositol + (9Z)-octadecenoate + H(+). It catalyses the reaction 1-(9Z-octadecenoyl)-sn-glycero-3-phosphoethanolamine + H2O = sn-glycero-3-phosphoethanolamine + (9Z)-octadecenoate + H(+). It carries out the reaction 1-(9Z-octadecenoyl)-sn-glycero-3-phosphocholine + H2O = 1-(9Z-octadecenoyl)-sn-glycerol + phosphocholine + H(+). The catalysed reaction is 2-(9Z-octadecenoyl)-glycerol + H2O = glycerol + (9Z)-octadecenoate + H(+). The enzyme catalyses 1-hexadecanoyl-sn-glycero-3-phospho-L-serine + H2O = sn-glycero-3-phospho-L-serine + hexadecanoate + H(+). It catalyses the reaction 2-(5Z,8Z,11Z,14Z-eicosatetraenoyl)-glycerol + H2O = glycerol + (5Z,8Z,11Z,14Z)-eicosatetraenoate + H(+). It carries out the reaction Hydrolyzes glycerol monoesters of long-chain fatty acids.. The catalysed reaction is 1-decanoylglycerol + H2O = decanoate + glycerol + H(+). The enzyme catalyses 1-dodecanoylglycerol + H2O = dodecanoate + glycerol + H(+). It catalyses the reaction 1-tetradecanoylglycerol + H2O = tetradecanoate + glycerol + H(+). It carries out the reaction 2-hexadecanoylglycerol + H2O = glycerol + hexadecanoate + H(+). The catalysed reaction is 1-(9Z-octadecenoyl)-glycerol + H2O = glycerol + (9Z)-octadecenoate + H(+). The enzyme catalyses 2-(9Z,12Z-octadecadienoyl)-glycerol + H2O = (9Z,12Z)-octadecadienoate + glycerol + H(+). It catalyses the reaction 1-(5Z,8Z,11Z,14Z-eicosatetraenoyl)-glycerol + H2O = glycerol + (5Z,8Z,11Z,14Z)-eicosatetraenoate + H(+). It carries out the reaction 1-(9Z,12Z-octadecadienoyl)-glycerol + H2O = (9Z,12Z)-octadecadienoate + glycerol + H(+). The catalysed reaction is 1-hexadecanoylglycerol + H2O = glycerol + hexadecanoate + H(+). The enzyme catalyses 1-octadecanoylglycerol + H2O = octadecanoate + glycerol + H(+). It catalyses the reaction 1-octadecanoyl-2-(9,10-epoxyoctadecanoyl)-sn-glycero-3-phospho-L-serine + H2O = 9,10-epoxyoctadecanoate + 1-octadecanoyl-sn-glycero-3-phosphoserine + H(+). It carries out the reaction 1-octadecanoyl-2-(10-hydroxyoctadecanoyl)-sn-glycero-3-phospho-L-serine + H2O = 1-octadecanoyl-sn-glycero-3-phosphoserine + 10-hydroxyoctadecanoate + H(+). The catalysed reaction is 1-hexadecanoyl-2-(10-hydroxyoctadecanoyl)-sn-glycero-3-phospho-L-serine + H2O = 10-hydroxyoctadecanoate + 1-hexadecanoyl-sn-glycero-3-phospho-L-serine + H(+). Its activity is regulated as follows. Selectively inhibited by DO264 (N-3-pyridyl-N'-(1-[3-chloro-4-{2-chloro-4-(trifluoromethoxy)phenoxy}pyridine-2-yl]piperidin-4-yl)thiourea). Lysophosphatidylserine (LPS) lipase that mediates the hydrolysis of lysophosphatidylserine, a class of signaling lipids that regulates immunological and neurological processes. Represents a major lysophosphatidylserine lipase in the brain, thereby playing a key role in the central nervous system. Also able to hydrolyze oxidized phosphatidylserine; oxidized phosphatidylserine is produced in response to severe inflammatory stress and constitutes a proapoptotic 'eat me' signal. Also has monoacylglycerol (MAG) lipase activity: hydrolyzes 2-arachidonoylglycerol (2-AG), thereby acting as a regulator of endocannabinoid signaling pathways. Has a strong preference for very-long-chain lipid substrates; substrate specificity is likely due to improved catalysis and not improved substrate binding. The sequence is that of Lysophosphatidylserine lipase ABHD12 from Mus musculus (Mouse).